A 158-amino-acid polypeptide reads, in one-letter code: 2-C-methyl-D-erythritol 2,4-cyclodiphosphate synthase (158 aa).

A divalent metal cation-binding residues include Asp9 and His11. Residues Asp9 to His11 and His35 to Ser36 each bind 4-CDP-2-C-methyl-D-erythritol 2-phosphate. His43 is an a divalent metal cation binding site. 4-CDP-2-C-methyl-D-erythritol 2-phosphate is bound by residues Asp57 to Gly59, Phe62 to Asp66, Ala101 to Ala107, Thr133 to Glu136, Phe140, and Arg143.

This sequence belongs to the IspF family. Homotrimer. Requires a divalent metal cation as cofactor.

The enzyme catalyses 4-CDP-2-C-methyl-D-erythritol 2-phosphate = 2-C-methyl-D-erythritol 2,4-cyclic diphosphate + CMP. It participates in isoprenoid biosynthesis; isopentenyl diphosphate biosynthesis via DXP pathway; isopentenyl diphosphate from 1-deoxy-D-xylulose 5-phosphate: step 4/6. In terms of biological role, involved in the biosynthesis of isopentenyl diphosphate (IPP) and dimethylallyl diphosphate (DMAPP), two major building blocks of isoprenoid compounds. Catalyzes the conversion of 4-diphosphocytidyl-2-C-methyl-D-erythritol 2-phosphate (CDP-ME2P) to 2-C-methyl-D-erythritol 2,4-cyclodiphosphate (ME-CPP) with a corresponding release of cytidine 5-monophosphate (CMP). The sequence is that of 2-C-methyl-D-erythritol 2,4-cyclodiphosphate synthase from Vibrio campbellii (strain ATCC BAA-1116).